Here is a 153-residue protein sequence, read N- to C-terminus: NAD(P)H-quinone oxidoreductase subunit N (153 aa).

The protein belongs to the complex I NdhN subunit family. NDH-1 can be composed of about 15 different subunits; different subcomplexes with different compositions have been identified which probably have different functions.

It localises to the cellular thylakoid membrane. It carries out the reaction a plastoquinone + NADH + (n+1) H(+)(in) = a plastoquinol + NAD(+) + n H(+)(out). It catalyses the reaction a plastoquinone + NADPH + (n+1) H(+)(in) = a plastoquinol + NADP(+) + n H(+)(out). In terms of biological role, NDH-1 shuttles electrons from an unknown electron donor, via FMN and iron-sulfur (Fe-S) centers, to quinones in the respiratory and/or the photosynthetic chain. The immediate electron acceptor for the enzyme in this species is believed to be plastoquinone. Couples the redox reaction to proton translocation, and thus conserves the redox energy in a proton gradient. Cyanobacterial NDH-1 also plays a role in inorganic carbon-concentration. In Prochlorococcus marinus (strain MIT 9211), this protein is NAD(P)H-quinone oxidoreductase subunit N.